The primary structure comprises 432 residues: Asparagine--tRNA ligase (432 aa).

This sequence belongs to the class-II aminoacyl-tRNA synthetase family. As to quaternary structure, homodimer.

It is found in the cytoplasm. It catalyses the reaction tRNA(Asn) + L-asparagine + ATP = L-asparaginyl-tRNA(Asn) + AMP + diphosphate + H(+). The chain is Asparagine--tRNA ligase from Limosilactobacillus reuteri (strain DSM 20016) (Lactobacillus reuteri).